The following is a 655-amino-acid chain: Kelch-like protein 13 (655 aa).

Residues 92–161 (CDVTLMPGDT…IYTAKLSLNM (70 aa)) form the BTB domain. One can recognise a BACK domain in the interval 196-297 (CVEVGRIANT…TPQELINYVQ (102 aa)). Kelch repeat units follow at residues 341–389 (HLVT…VIGN), 390–441 (FLYV…ALKG), 442–488 (YLYA…VYGG), 490–535 (MYIS…TVGE), 537–587 (LYVI…VFEN), and 588–636 (KIYV…TLTV).

As to quaternary structure, component of the BCR(KLHL9-KLHL13) E3 ubiquitin ligase complex, at least composed of CUL3, KLHL9, KLHL13 and RBX1. Interacts with AURKB.

Its pathway is protein modification; protein ubiquitination. Functionally, substrate-specific adapter of a BCR (BTB-CUL3-RBX1) E3 ubiquitin-protein ligase complex required for mitotic progression and cytokinesis. The BCR(KLHL9-KLHL13) E3 ubiquitin ligase complex mediates the ubiquitination of AURKB and controls the dynamic behavior of AURKB on mitotic chromosomes and thereby coordinates faithful mitotic progression and completion of cytokinesis. The sequence is that of Kelch-like protein 13 (KLHL13) from Homo sapiens (Human).